The primary structure comprises 72 residues: Mu-like prophage FluMu protein C (72 aa).

A DNA-binding region (H-T-H motif) is located at residues 35-55 (NVPDLIKKYRLSESTIYAILR).

Belongs to the c/mor transcriptional regulatory family.

Functionally, required for transcription of the phage late genes. This Haemophilus influenzae (strain ATCC 51907 / DSM 11121 / KW20 / Rd) protein is Mu-like prophage FluMu protein C.